The following is a 134-amino-acid chain: Interleukin-5 (134 aa).

The signal sequence occupies residues 1–19 (MRMLLHLSLLALGAAYVSA). N-linked (GlcNAc...) asparagine glycans are attached at residues Asn-76 and Asn-90.

It belongs to the IL-5 family. As to quaternary structure, homodimer; disulfide-linked. Interacts with IL5RA. Interacts with CSF2RB.

The protein resides in the secreted. Functionally, homodimeric cytokine expressed predominantly by T-lymphocytes and NK cells that plays an important role in the survival, differentiation, and chemotaxis of eosinophils. Also acts on activated and resting B-cells to induce immunoglobulin production, growth, and differentiation. Mechanistically, exerts its biological effects through a receptor composed of IL5RA subunit and the cytokine receptor common subunit beta/CSF2RB. Binding to the receptor leads to activation of various kinases including LYN, SYK and JAK2 and thereby propagates signals through the RAS-MAPK and JAK-STAT5 pathways respectively. This chain is Interleukin-5 (IL5), found in Felis catus (Cat).